A 219-amino-acid polypeptide reads, in one-letter code: Mediator of RNA polymerase II transcription subunit 21 (219 aa).

Residues 86 to 125 (SAEEQLHKIDSLQKKLVDIEDEKIHAIKKKDDLLKQVDDL) adopt a coiled-coil conformation. Residues 141-219 (SLAPENVQED…ISESISPGKI (79 aa)) form a disordered region. 2 stretches are compositionally biased toward basic and acidic residues: residues 166–181 (IEQKIANEKIESKIEG) and 191–204 (SDSKSADSELFMDK). A compositionally biased stretch (polar residues) spans 210–219 (ISESISPGKI).

Belongs to the Mediator complex subunit 21 family. In terms of assembly, component of the Mediator complex.

The protein localises to the nucleus. In terms of biological role, component of the Mediator complex, a coactivator involved in the regulated transcription of nearly all RNA polymerase II-dependent genes. Mediator functions as a bridge to convey information from gene-specific regulatory proteins to the basal RNA polymerase II transcription machinery. Mediator is recruited to promoters by direct interactions with regulatory proteins and serves as a scaffold for the assembly of a functional preinitiation complex with RNA polymerase II and the general transcription factors. The sequence is that of Mediator of RNA polymerase II transcription subunit 21 (SRB7) from Candida glabrata (strain ATCC 2001 / BCRC 20586 / JCM 3761 / NBRC 0622 / NRRL Y-65 / CBS 138) (Yeast).